The sequence spans 1291 residues: DNA-directed RNA polymerase subunit beta' (1291 aa).

Zn(2+) contacts are provided by C60, C62, C75, and C78. Mg(2+)-binding residues include D535, D537, and D539. C874, C951, C958, and C961 together coordinate Zn(2+).

Belongs to the RNA polymerase beta' chain family. The RNAP catalytic core consists of 2 alpha, 1 beta, 1 beta' and 1 omega subunit. When a sigma factor is associated with the core the holoenzyme is formed, which can initiate transcription. Requires Mg(2+) as cofactor. Zn(2+) serves as cofactor.

It carries out the reaction RNA(n) + a ribonucleoside 5'-triphosphate = RNA(n+1) + diphosphate. Its function is as follows. DNA-dependent RNA polymerase catalyzes the transcription of DNA into RNA using the four ribonucleoside triphosphates as substrates. The protein is DNA-directed RNA polymerase subunit beta' of Leifsonia xyli subsp. xyli (strain CTCB07).